Here is a 134-residue protein sequence, read N- to C-terminus: Ribonuclease VapC (134 aa).

A PINc domain is found at 4 to 124 (IVDTSIIIAL…NTKDFKRIPE (121 aa)). D6 contacts Mg(2+).

The protein belongs to the PINc/VapC protein family. Requires Mg(2+) as cofactor.

Toxic component of a type II toxin-antitoxin (TA) system. Has ssRNase activity. Its RNase activity is partially neutralized by cognate antitoxin VapB. Rapidly induces apoptosis upon microinjection into mouse fibroblasts (L929 line). Probably contributes to host cell death if bacterial cell lysis occurs during host infection. The chain is Ribonuclease VapC from Rickettsia bellii (strain RML369-C).